The primary structure comprises 122 residues: MLQELSRLNVADNTGAKIVGVIRNLGGSVKKTSNIGDIVVVSVKKAIPNGMLKEGQVVKALIVRSTYGLRRKNGTHIKFDDNAVVIIKEDGTPRGTRVFGPIAREIREKGYLKIASLAQEVL.

The protein belongs to the universal ribosomal protein uL14 family. Part of the 50S ribosomal subunit. Forms a cluster with proteins L3 and L19. In the 70S ribosome, L14 and L19 interact and together make contacts with the 16S rRNA in bridges B5 and B8.

Functionally, binds to 23S rRNA. Forms part of two intersubunit bridges in the 70S ribosome. The polypeptide is Large ribosomal subunit protein uL14 (Mesomycoplasma hyopneumoniae (strain 232) (Mycoplasma hyopneumoniae)).